A 274-amino-acid chain; its full sequence is Sulfur carrier protein FdhD (274 aa).

Residue Cys121 is the Cysteine persulfide intermediate of the active site. 258–263 (FSKPGR) lines the Mo-bis(molybdopterin guanine dinucleotide) pocket.

This sequence belongs to the FdhD family.

The protein localises to the cytoplasm. Its function is as follows. Required for formate dehydrogenase (FDH) activity. Acts as a sulfur carrier protein that transfers sulfur from IscS to the molybdenum cofactor prior to its insertion into FDH. This is Sulfur carrier protein FdhD from Yersinia pseudotuberculosis serotype O:1b (strain IP 31758).